A 481-amino-acid chain; its full sequence is Regulator of G-protein signaling 1 (481 aa).

Positions 1 to 31 (MPALHNPSSPPPSYEAVTSYRNGNSIDSGDK) are disordered. Positions 33-227 (QQCSRLMKIT…SVHEIGKSKN (195 aa)) are fungal-DR. Residues 232 to 312 (PVYSVSSPSP…KGVSYFLTGK (81 aa)) form the DEP domain. The region spanning 344–474 (ILETILRKPN…AGDSLLKFLE (131 aa)) is the RGS domain.

Its subcellular location is the nucleus. It is found in the cytoplasm. In terms of biological role, negatively regulates pheromone signaling during mating. Acts in a negative feedback loop that is essential for the mating process. This loop acts to down-regulate cellular sensitivity to pheromone. Activated by ste11. This is Regulator of G-protein signaling 1 (rgs1) from Schizosaccharomyces pombe (strain 972 / ATCC 24843) (Fission yeast).